A 193-amino-acid chain; its full sequence is dCTP deaminase (193 aa).

Residues 110–115, Asp128, 136–138, Tyr171, Lys178, and Gln182 contribute to the dCTP site; these read RSSLAR and VLE. The Proton donor/acceptor role is filled by Glu138. The tract at residues 169 to 193 is disordered; sequence RPYNRRQDAKYRDQQGAVASRIDKD.

The protein belongs to the dCTP deaminase family. As to quaternary structure, homotrimer.

The catalysed reaction is dCTP + H2O + H(+) = dUTP + NH4(+). Its pathway is pyrimidine metabolism; dUMP biosynthesis; dUMP from dCTP (dUTP route): step 1/2. Its function is as follows. Catalyzes the deamination of dCTP to dUTP. The polypeptide is dCTP deaminase (Salmonella paratyphi B (strain ATCC BAA-1250 / SPB7)).